The sequence spans 299 residues: Glycine--tRNA ligase alpha subunit (299 aa).

This sequence belongs to the class-II aminoacyl-tRNA synthetase family. In terms of assembly, tetramer of two alpha and two beta subunits.

The protein localises to the cytoplasm. It carries out the reaction tRNA(Gly) + glycine + ATP = glycyl-tRNA(Gly) + AMP + diphosphate. In Dichelobacter nodosus (strain VCS1703A), this protein is Glycine--tRNA ligase alpha subunit.